Consider the following 392-residue polypeptide: B2 bradykinin receptor (392 aa).

The Extracellular portion of the chain corresponds to 1–61 (MPCSWKLLGF…EWWSWLNAIQ (61 aa)). Residues Asn29 and Asn40 are each glycosylated (N-linked (GlcNAc...) asparagine). A helical membrane pass occupies residues 62 to 85 (APFLWVLFLLAALENLFVLSVFFL). Over 86 to 94 (HKNSCTVAE) the chain is Cytoplasmic. Residues 95 to 119 (IYLGNLAAADLILACGLPFWAITIA) traverse the membrane as a helical segment. Residues 120–132 (NNFDWVFGEVLCR) are Extracellular-facing. Cys131 and Cys212 form a disulfide bridge. Residues 133–154 (VVNTMIYMNLYSSICFLMLVSI) traverse the membrane as a helical segment. Over 155 to 176 (DRYLALVKTMSMGRMRGVRWAK) the chain is Cytoplasmic. Tyr157 carries the phosphotyrosine modification. A helical membrane pass occupies residues 177 to 199 (LYSLVIWGCTLLLSSPMLVFRTM). Over 200 to 222 (REYSEEGHNVTACVIVYPSRSWE) the chain is Extracellular. N-linked (GlcNAc...) asparagine glycosylation occurs at Asn208. The helical transmembrane segment at 223-249 (VFTNVLLNLVGFLLPLSVITFCTVRIL) threads the bilayer. Residues 250–268 (QVLRNNEMKKFKEVQTERK) are Cytoplasmic-facing. Residues 269–293 (ATVLVLAVLGLFVLCWVPFQISTFL) traverse the membrane as a helical segment. Residues 294–312 (DTLLRLGVLSGCWDEHAVD) lie on the Extracellular side of the membrane. The chain crosses the membrane as a helical span at residues 313 to 336 (VITQISSYVAYSNSGLNPLVYVIV). At 337-392 (GKRFRKKSREVYRVLCQKGGCMGEPVQMENSMGTLRTSISVERQIHKLQDWAGKKQ) the chain is on the cytoplasmic side. Position 348 is a phosphotyrosine (Tyr348). A lipid anchor (S-palmitoyl cysteine) is attached at Cys352. A Phosphoserine modification is found at Ser367. At Thr370 the chain carries Phosphothreonine. A phosphoserine; by GRK6 mark is found at Ser374 and Ser376.

It belongs to the G-protein coupled receptor 1 family. Bradykinin receptor subfamily. BDKRB2 sub-subfamily. Forms a complex with PECAM1 and GNAQ. Interacts with PECAM1.

The protein localises to the cell membrane. Its function is as follows. Receptor for bradykinin. It is associated with G proteins that activate a phosphatidylinositol-calcium second messenger system. The protein is B2 bradykinin receptor (Bdkrb2) of Mus musculus (Mouse).